A 675-amino-acid chain; its full sequence is Heat shock 70 kDa protein 12A (675 aa).

Positions 1–45 (MADKEAGGGDAGPRETAPTSTYSSPARSLGDTGITPLSPSHILND) are disordered. Alanine 2 is subject to N-acetylalanine. Polar residues predominate over residues 17–26 (APTSTYSSPA).

It belongs to the heat shock protein 70 family. As to quaternary structure, interacts with SORL1 (via cytosolic C-terminus); this interaction affects SORL1 internalization and subcellular localization. As to expression, expressed most strongly in brain, kidney and heart with little or no expression in other tissues. In the brain, expressed in glial cells, including astrocytes (at protein level). In the aorta, preferentially expressed in lesions.

It is found in the cytoplasm. The protein localises to the nucleus. In terms of biological role, adapter protein for SORL1, but not SORT1. Delays SORL1 internalization and affects SORL1 subcellular localization. The sequence is that of Heat shock 70 kDa protein 12A (Hspa12a) from Mus musculus (Mouse).